A 132-amino-acid chain; its full sequence is Small ribosomal subunit protein uS8 (132 aa).

This sequence belongs to the universal ribosomal protein uS8 family. As to quaternary structure, part of the 30S ribosomal subunit. Contacts proteins S5 and S12.

Functionally, one of the primary rRNA binding proteins, it binds directly to 16S rRNA central domain where it helps coordinate assembly of the platform of the 30S subunit. The chain is Small ribosomal subunit protein uS8 from Streptomyces coelicolor (strain ATCC BAA-471 / A3(2) / M145).